Here is a 276-residue protein sequence, read N- to C-terminus: Ribosomal RNA small subunit methyltransferase A (276 aa).

The S-adenosyl-L-methionine site is built by Asn27, Leu29, Gly54, Glu75, Asp101, and Asn123.

This sequence belongs to the class I-like SAM-binding methyltransferase superfamily. rRNA adenine N(6)-methyltransferase family. RsmA subfamily.

It localises to the cytoplasm. It catalyses the reaction adenosine(1518)/adenosine(1519) in 16S rRNA + 4 S-adenosyl-L-methionine = N(6)-dimethyladenosine(1518)/N(6)-dimethyladenosine(1519) in 16S rRNA + 4 S-adenosyl-L-homocysteine + 4 H(+). Its function is as follows. Specifically dimethylates two adjacent adenosines (A1518 and A1519) in the loop of a conserved hairpin near the 3'-end of 16S rRNA in the 30S particle. May play a critical role in biogenesis of 30S subunits. The polypeptide is Ribosomal RNA small subunit methyltransferase A (Bartonella quintana (strain Toulouse) (Rochalimaea quintana)).